The primary structure comprises 189 residues: UPF0301 protein RAF_ORF0041 (189 aa).

Belongs to the UPF0301 (AlgH) family.

The chain is UPF0301 protein RAF_ORF0041 from Rickettsia africae (strain ESF-5).